Here is a 196-residue protein sequence, read N- to C-terminus: uncharacterized protein (196 aa).

The HTH cro/C1-type domain occupies 12 to 66 (LRAAREAQKMSQRELSARSGLTQSHISQIERGTMEPGLGSLVDVARALDLEIVLA). The segment at residues 23-42 (QRELSARSGLTQSHISQIER) is a DNA-binding region (H-T-H motif). A disordered region spans residues 174–196 (VHRDRDDAVPRSAYALDEEDDNA).

This is an uncharacterized protein from Sinorhizobium fredii (strain NBRC 101917 / NGR234).